A 260-amino-acid polypeptide reads, in one-letter code: Voltage-dependent calcium channel gamma-6 subunit (260 aa).

4 helical membrane passes run 43–63, 143–163, 169–189, and 221–241; these read LLVA…EFWV, VIAV…IMVL, FLLR…FVSL, and LGCG…FLLL.

The protein belongs to the PMP-22/EMP/MP20 family. CACNG subfamily. In terms of assembly, interacts with CACNA1C. Identified in a complex with the L-type calcium channel subunits CACNA1C, CACNA2D1 and either CACNB1 or CACNB2. As to expression, detected in heart atrium and ventricle, aorta and skeletal muscle. Detected in heart left ventricle.

The protein resides in the cell membrane. Regulates the activity of L-type calcium channels that contain CACNA1C as pore-forming subunit. The chain is Voltage-dependent calcium channel gamma-6 subunit (Cacng6) from Rattus norvegicus (Rat).